Reading from the N-terminus, the 423-residue chain is G protein-activated inward rectifier potassium channel 2 (423 aa).

Topologically, residues 1 to 89 (MAKLTESMTN…IFTTLVDLKW (89 aa)) are cytoplasmic. Phosphoserine occurs at positions 16 and 23. Residues 90–114 (RFNLLIFVMVYTVTWLFFGMIWWLI) traverse the membrane as a helical segment. Over 115 to 138 (AYIRGDMDHIEDPSWTPCVTNLNG) the chain is Extracellular. The segment at residues 139-150 (FVSAFLFSIETE) is an intramembrane region (helical; Pore-forming). The pore-forming intramembrane region spans 151 to 157 (TTIGYGY). The Selectivity filter motif lies at 152–157 (TIGYGY). At 158 to 166 (RVITDKCPE) the chain is on the extracellular side. A helical transmembrane segment spans residues 167–188 (GIILLLIQSVLGSIVNAFMVGC). Topologically, residues 189–423 (MFVKISQPKK…VANLENESKV (235 aa)) are cytoplasmic. The segment at 390-423 (NQHAELETEEEEKNLEEQTERNGDVANLENESKV) is disordered. The short motif at 420–423 (ESKV) is the PDZ-binding element.

Belongs to the inward rectifier-type potassium channel (TC 1.A.2.1) family. KCNJ6 subfamily. In terms of assembly, associates with KCNJ3/GIRK1 or KCNJ5/GRIK4 to form a G-protein-activated heteromultimer pore-forming unit. The resulting inward current is much larger. Interacts (via PDZ-binding motif) with SNX27 (via PDZ domain); the interaction is required when endocytosed to prevent degradation in lysosomes and promote recycling to the plasma membrane. Most abundant in cerebellum, and to a lesser degree in islets and exocrine pancreas.

It localises to the membrane. It catalyses the reaction K(+)(in) = K(+)(out). With respect to regulation, activated by phosphatidylinositol 4,5 biphosphate (PtdIns(4,5)P2). Inward rectifier potassium channels are characterized by a greater tendency to allow potassium to flow into the cell rather than out of it. Their voltage dependence is regulated by the concentration of extracellular potassium; as external potassium is raised, the voltage range of the channel opening shifts to more positive voltages. The inward rectification is mainly due to the blockage of outward current by internal magnesium. This potassium channel may be involved in the regulation of insulin secretion by glucose and/or neurotransmitters acting through G-protein-coupled receptors. In Homo sapiens (Human), this protein is G protein-activated inward rectifier potassium channel 2 (KCNJ6).